The sequence spans 350 residues: Purine-binding protein BAB2_0673 (350 aa).

An N-terminal signal peptide occupies residues Met-1–Ala-17. Adenine is bound by residues Trp-36, Trp-185, and Asp-211.

It belongs to the BMP lipoprotein family.

Functionally, binds adenine and probably also other purines, such as guanine. May play a role in adenine and guanine uptake. May be part of an ABC-type uptake system for adenine and similar ligands. This Brucella abortus (strain 2308) protein is Purine-binding protein BAB2_0673.